We begin with the raw amino-acid sequence, 155 residues long: Deoxyuridine 5'-triphosphate nucleotidohydrolase (155 aa).

Residues 74–76, Asn87, and 91–93 contribute to the substrate site; these read RSG and LID.

Belongs to the dUTPase family. Mg(2+) is required as a cofactor.

It carries out the reaction dUTP + H2O = dUMP + diphosphate + H(+). It functions in the pathway pyrimidine metabolism; dUMP biosynthesis; dUMP from dCTP (dUTP route): step 2/2. Functionally, this enzyme is involved in nucleotide metabolism: it produces dUMP, the immediate precursor of thymidine nucleotides and it decreases the intracellular concentration of dUTP so that uracil cannot be incorporated into DNA. This is Deoxyuridine 5'-triphosphate nucleotidohydrolase from Xanthomonas axonopodis pv. citri (strain 306).